Reading from the N-terminus, the 351-residue chain is Terpene cyclase sdgD (351 aa).

The next 9 helical transmembrane spans lie at 7-27 (INFI…TILI), 62-82 (TGVP…WPVI), 89-109 (LSLL…LLLL), 126-146 (WVGL…YCAI), 160-180 (IPHV…LVAL), 193-213 (VVVA…FMAS), 229-249 (IYIF…LASL), 281-301 (FLQW…VAVY), and 316-336 (LEVC…LLIW).

This sequence belongs to the membrane-bound ascI terpene cyclase family.

It is found in the membrane. It participates in secondary metabolite biosynthesis. In terms of biological role, epoxide hydrolase; part of the gene cluster that mediates the biosynthesis of the polyenes aspernidgulenes. The carbon backbone of aspernidgulenes is synthesized by the HR-PKS sdgA, which accepts acetyl-CoA as the starter unit and performs malonyl-CoA extensions as well as regioselective methylation and reduction. The resulting nonaketide offloads the HR-PKS by intramolecular lactonization to yield the 5,6-dihydro-alpha-pyrone-containing hexaenoic acids preaspernidgulene A1 and A2. The FAD-dependent monooxygenase sdgC then installs the first epoxide on the penultimate double bond. Subsequently, the FAD-dependent monooxygenase sdgF presumably generates a ketone intermediate through Meinwald rearrangement involving a hydride shift. Next, sdgC introduces another epoxide on the last olefin of the ketone intermediate after E/Z isomerization. The epoxide hydrolase sdgD then catalyzes stereospecific cyclization of the 5,6-dihydro-alpha-pyrone and opening of the epoxide ring to form an oxygenated trimethylcyclopentanone and an oxabicyclo[2.2.1]heptane unit. Finally, the bicyclic unit undergoes hydrolytic cleavage, either spontaneously or catalyzed by sdgD, to assemble the dimethyl-gamma-lactone moiety in aspernidgulene A1. The chain is Terpene cyclase sdgD from Emericella nidulans (strain FGSC A4 / ATCC 38163 / CBS 112.46 / NRRL 194 / M139) (Aspergillus nidulans).